The following is an 877-amino-acid chain: Probable alpha/beta-glucosidase agdC (877 aa).

An N-terminal signal peptide occupies residues M1–A14. N-linked (GlcNAc...) asparagine glycosylation is found at N171, N293, and N373. D422 functions as the Nucleophile in the catalytic mechanism. E425 is an active-site residue. A disordered region spans residues D432 to S476. A compositionally biased stretch (pro residues) spans P447 to G463. Residue N508 is glycosylated (N-linked (GlcNAc...) asparagine). The Proton donor role is filled by D573. N-linked (GlcNAc...) asparagine glycosylation is found at N574, N610, and N744.

Belongs to the glycosyl hydrolase 31 family.

The protein localises to the secreted. The catalysed reaction is Hydrolysis of terminal, non-reducing (1-&gt;4)-linked alpha-D-glucose residues with release of alpha-D-glucose.. It carries out the reaction Hydrolysis of terminal, non-reducing beta-D-glucosyl residues with release of beta-D-glucose.. Its function is as follows. Glucosidase involved in the degradation of cellulosic biomass. Has both alpha- and beta-glucosidase activity. In Aspergillus flavus (strain ATCC 200026 / FGSC A1120 / IAM 13836 / NRRL 3357 / JCM 12722 / SRRC 167), this protein is Probable alpha/beta-glucosidase agdC (agdC).